A 320-amino-acid chain; its full sequence is Olfactory receptor 5C1 (320 aa).

The Extracellular segment spans residues 1–29 (MNSENLTRAAVAPAEFVLLGITNRWDLRV). N5 carries an N-linked (GlcNAc...) asparagine glycan. A helical transmembrane segment spans residues 30–50 (ALFLTCLPVYLVSLLGNMGMA). The Cytoplasmic portion of the chain corresponds to 51–58 (LLIRMDAR). A helical transmembrane segment spans residues 59–79 (LHTPMYFFLANLSLLDACYSS). Over 80–103 (AIGPKMLVDLLLPRATIPYTACAL) the chain is Extracellular. The cysteines at positions 101 and 193 are disulfide-linked. The helical transmembrane segment at 104-124 (QMFVFAGLADTECCLLAAMAY) threads the bilayer. The Cytoplasmic portion of the chain corresponds to 125 to 143 (DRYVAIRNPLLYTTAMSQR). A helical transmembrane segment spans residues 144 to 164 (LCLALLGASGLGGAVSAFVHT). Topologically, residues 165–200 (TLTFRLSFCRSRKINSFFCDIPPLLAISCSDTSLNE) are extracellular. The helical transmembrane segment at 201–221 (LLLFAICGFIQTATVLAITVS) threads the bilayer. The Cytoplasmic portion of the chain corresponds to 222 to 241 (YGFIAGAVIHMRSVEGSRRA). Residues 242 to 262 (ASTGGSHLTAVAMMYGTLIFM) traverse the membrane as a helical segment. Residues 263 to 275 (YLRPSSSYALDTD) lie on the Extracellular side of the membrane. A helical membrane pass occupies residues 276–296 (KMASVFYTLVIPSLNPLIYSL). The Cytoplasmic segment spans residues 297-320 (RNKEVKEALRQTWSRFHCPGQGSQ).

Belongs to the G-protein coupled receptor 1 family.

It is found in the cell membrane. In terms of biological role, odorant receptor. The chain is Olfactory receptor 5C1 (OR5C1) from Homo sapiens (Human).